Consider the following 88-residue polypeptide: Small ribosomal subunit protein uS17 (88 aa).

This sequence belongs to the universal ribosomal protein uS17 family. In terms of assembly, part of the 30S ribosomal subunit.

Functionally, one of the primary rRNA binding proteins, it binds specifically to the 5'-end of 16S ribosomal RNA. The protein is Small ribosomal subunit protein uS17 of Oenococcus oeni (strain ATCC BAA-331 / PSU-1).